Reading from the N-terminus, the 436-residue chain is MFDSTLNPLWQRYILAVQEEVKPALGCTEPISLALAAAVAAAELEGPVERVEAWVSPNLMKNGLGVTVPGTGMVGLPIAAALGALGGNANAGLEVLKDATAQAIADAKALLAAGKVSVKIQEPCNEILFSRAKVWNGEKWACVTIVGGHTNIVHIETHNSVVFTQQACVAEGEQESPLTVLSRTTLAEILKFVNEVPFAAIRFILDSAKLNCALSQEGLSGKWGLHIGATLEKQCERGLLAKDLSSSIVIRTSAASDARMGGATLPAMSNSGSGNQGITATMPVVVVAEHFGADDERLARALMLSHLSAIYIHNQLPRLSALCAATTAAMGAAAGMAWLVDGRYETISMAISSMIGDVSGMICDGASNSCAMKVSTSASAAWKAVLMALDDTAVTGNEGIVAHDVEQSIANLCALASHSMQQTDRQIIEIMASKAR.

It belongs to the UPF0597 family.

The chain is UPF0597 protein YhaM from Shigella boydii serotype 4 (strain Sb227).